The following is a 129-amino-acid chain: MSNVPAELKYSKEHEWLRKEADGTYTVGITEHAQELLGDMVFVDLPDVGTTVSAGDDCAVAESVKAASDIYAPVSGEIVAVNDALSDSPELVNSDPYTDGWIFKIRAADEAEVEALLDATAYAALLENE.

The Lipoyl-binding domain maps to 24 to 106 (TYTVGITEHA…YTDGWIFKIR (83 aa)). N6-lipoyllysine is present on lysine 65.

Belongs to the GcvH family. The glycine cleavage system is composed of four proteins: P, T, L and H. Requires (R)-lipoate as cofactor.

The glycine cleavage system catalyzes the degradation of glycine. The H protein shuttles the methylamine group of glycine from the P protein to the T protein. The polypeptide is Glycine cleavage system H protein (Enterobacter sp. (strain 638)).